The following is a 346-amino-acid chain: E3 ubiquitin-protein ligase ARK2C (346 aa).

Disordered stretches follow at residues 23–76 (PFQR…QHSG) and 267–288 (PHKYKKRRPQDGKGKKDEGEES). Residues 266-268 (FPH) are ubiquitin binding. A compositionally biased stretch (basic and acidic residues) spans 275-284 (PQDGKGKKDE). Residues Cys-294 and Cys-297 each coordinate Zn(2+). The segment at 294–335 (CTICLSMLEDGEDVRRLPCMHLFHQLCVDQWLAMSKKCPICR) adopts an RING-type; atypical zinc-finger fold. Positions 309–313 (RLPCM) are ubiquitin binding. The Zn(2+) site is built by His-317 and Cys-320.

It belongs to the Arkadia family. As to quaternary structure, monomer; binding to the ubiquitin-conjugating enzyme E2 does not trigger homodimerization.

The protein localises to the nucleus. The catalysed reaction is S-ubiquitinyl-[E2 ubiquitin-conjugating enzyme]-L-cysteine + [acceptor protein]-L-lysine = [E2 ubiquitin-conjugating enzyme]-L-cysteine + N(6)-ubiquitinyl-[acceptor protein]-L-lysine.. With respect to regulation, binds free ubiquitin non-covalently via its RING-type zinc finger. Ubiquitin-binding leads to enhance the E3 ubiquitin-protein ligase activity by stabilizing the ubiquitin-conjugating enzyme E2 (donor ubiquitin) in the 'closed' conformation and activating ubiquitin transfer. In terms of biological role, E3 ubiquitin-protein ligase that acts as a regulator of motor axon elongation. Required for efficient motor axon extension in the dorsal forelimb by enhancing the transcriptional responses of the SMAD1/SMAD5/SMAD8 effectors, which are activated downstream of BMP. Acts by mediating ubiquitination and degradation of SMAD inhibitors such as SMAD6, SMAD7, SKI and SNON isoform of SKIL. This Homo sapiens (Human) protein is E3 ubiquitin-protein ligase ARK2C.